A 354-amino-acid polypeptide reads, in one-letter code: Protein-arginine kinase (354 aa).

Residues 24–254 (IVLSSRIRLA…QQIIQQEKMA (231 aa)) form the Phosphagen kinase C-terminal domain. ATP contacts are provided by residues 27–31 (SSRIR), H92, R125, 176–180 (RASVM), and 207–212 (RGIYGE). An RDXXRA motif of the pArg binding pocket involved in allosteric regulation motif is present at residues 337-342 (RDYRRA).

The protein belongs to the ATP:guanido phosphotransferase family.

The enzyme catalyses L-arginyl-[protein] + ATP = N(omega)-phospho-L-arginyl-[protein] + ADP + H(+). Appears to be allosterically activated by the binding of pArg-containing polypeptides to the pArg-binding pocket localized in the C-terminal domain of McsB. In terms of biological role, catalyzes the specific phosphorylation of arginine residues in a large number of proteins. Is part of the bacterial stress response system. Protein arginine phosphorylation has a physiologically important role and is involved in the regulation of many critical cellular processes, such as protein homeostasis, motility, competence, and stringent and stress responses, by regulating gene expression and protein activity. This chain is Protein-arginine kinase, found in Bacillus thuringiensis subsp. konkukian (strain 97-27).